A 523-amino-acid polypeptide reads, in one-letter code: Transcription factor MYB120 (523 aa).

2 consecutive HTH myb-type domains span residues 23 to 75 and 76 to 130; these read GVIL…ANHL and RPNL…KRLL. 2 consecutive DNA-binding regions (H-T-H motif) follow at residues 51 to 75 and 103 to 126; these read WNAVQKNTGLARCGKSCRLRWANHL and WARMAAQLPGRTDNEIKNYWNTRL. Disordered stretches follow at residues 140–254, 332–373, 396–426, and 444–470; these read DIIP…YPTL, QTAT…SHYT, QIPQIDGFNNVNNFTDNERQNHNLNSSGAHR, and LASGGRGRPPKRRQLTASLPNHNNNTN. The span at 147–167 shows a compositional bias: basic residues; sequence LHPHPHHQQQQQHNHHHHHHQ. A compositionally biased stretch (polar residues) spans 175–185; sequence MYFQPQSSQRN. 3 stretches are compositionally biased toward low complexity: residues 202-212, 223-232, and 341-368; these read SSSSFTFHTTT, TPNTPSQLSS, and NPYSSSPSFSLNPSSSSYPTSTSSPSFL. A compositionally biased stretch (polar residues) spans 396 to 410; sequence QIPQIDGFNNVNNFT.

As to expression, expressed in pollen grains and pollen tube. Mostly expressed in mature pollen grains, and, to a lower extent, in inflorescences and siliques.

It localises to the nucleus. In terms of biological role, transcription activator. Binds to 5'-CAACTGTC-3' and/or 5'-TAACAAA-3' motif in target gene promoter to promote their expression. Together with MYB97 and MYB101, functions as a male factor that controls pollen tube-synergid interaction in fertilization. Required for pollen tube growth arrest and sperm cell release in the female gametophyte, probably via the regulation of pollen tube-specific gene expression. The sequence is that of Transcription factor MYB120 from Arabidopsis thaliana (Mouse-ear cress).